The primary structure comprises 684 residues: MENQIHSLLHFPSSASTGSTSNSHNNHHNNNNNNNYNNNNNNNINNINNNHHHHHNYKSIQQHSPHSSTPNISTENVDIYSSHEANSSNGYNNGNNFSYSMNGNFNYNFSPMNSPHHSHNHPDTSNNNMLPLNDSGIHFNQHQHPSSASSSSSSSSSSLSSSSHHHHSNHHHHHPNLHINLPPIPQYPSLNDSSSNGNGTPALSSPSSTTPHPTTPHPTTPTSTPNQRFQSNGSSSFQNQLQNHLENKLSSFWSSQLRDIHKTEDFKTHELPLARIKKIMKSDKDVNKISSEAPILFAKACEILILEMTHRSWVHTEMNKRRTLQRTDIINSLSRCETFDFLIDMLPRDEIKPSRKYLDELSKAQVITPEYLQYLQLQQMATENQQKNNQNNQNNQNKNNQQILPQQRNLNIPHSPQLQEQSSNNNNNNNNNNNNNNSVSVKRSYSMEIQNSSPLSTPKKRSNSQDYNFQYNENNHNQSSLSQTQQLQQLNQQQQQQQQQQQQQQQQQQQQQQQHSQQISQQIHHIPTPSNSSSSLPPLPPHNSNHAHNNNNNNNNNNNNNNNNNLNNNNNNNNNNNNNNNNNNNNNNNNNNNNNNNNNNNNNNNNNNNNNNNNNNNNNNNNNNNNNNNNNNNNNNNTFDYSFNDSKNDEHKVSLNESNFISTPTNDNIISSSPSSQVYYYSDN.

4 disordered regions span residues 1–74 (MENQ…NIST), 112–238 (MNSP…SSFQ), 414–487 (HSPQ…TQQL), and 511–650 (QQQQ…KNDE). A compositionally biased stretch (low complexity) spans 21-49 (SNSHNNHHNNNNNNNYNNNNNNNINNINN). Residues 58-74 (KSIQQHSPHSSTPNIST) show a composition bias toward polar residues. The span at 142-162 (HQHPSSASSSSSSSSSSLSSS) shows a compositional bias: low complexity. The segment covering 163 to 176 (SHHHHSNHHHHHPN) has biased composition (basic residues). A compositionally biased stretch (polar residues) spans 188-203 (PSLNDSSSNGNGTPAL). Over residues 220–238 (TPTSTPNQRFQSNGSSSFQ) the composition is skewed to low complexity. Over residues 414 to 423 (HSPQLQEQSS) the composition is skewed to polar residues. Positions 424-437 (NNNNNNNNNNNNNN) are enriched in low complexity. Polar residues-rich tracts occupy residues 438 to 456 (SVSV…SPLS) and 464 to 477 (SQDY…NNHN). Low complexity-rich tracts occupy residues 478 to 487 (QSSLSQTQQL), 511 to 522 (QQQQHSQQISQQ), and 529 to 637 (PSNS…NNNN).

The protein belongs to the NFYC/HAP5 subunit family. As to quaternary structure, heterotrimeric transcription factor composed of three components, NF-YA, NF-YB and NF-YC. NF-YB and NF-YC must interact and dimerize for NF-YA association and DNA binding.

Its subcellular location is the nucleus. Its function is as follows. Stimulates the transcription of various genes by recognizing and binding to a CCAAT motif in promoters. The chain is Nuclear transcription factor Y subunit gamma (nfyc-1) from Dictyostelium discoideum (Social amoeba).